Reading from the N-terminus, the 232-residue chain is 2,3,4,5-tetrahydropyridine-2,6-dicarboxylate N-acetyltransferase (232 aa).

This sequence belongs to the transferase hexapeptide repeat family. DapH subfamily.

It catalyses the reaction (S)-2,3,4,5-tetrahydrodipicolinate + acetyl-CoA + H2O = L-2-acetamido-6-oxoheptanedioate + CoA. The protein operates within amino-acid biosynthesis; L-lysine biosynthesis via DAP pathway; LL-2,6-diaminopimelate from (S)-tetrahydrodipicolinate (acetylase route): step 1/3. Catalyzes the transfer of an acetyl group from acetyl-CoA to tetrahydrodipicolinate. The protein is 2,3,4,5-tetrahydropyridine-2,6-dicarboxylate N-acetyltransferase of Streptococcus mutans serotype c (strain ATCC 700610 / UA159).